The sequence spans 192 residues: Ion-translocating oxidoreductase complex subunit B (192 aa).

Positions 1-26 (MNTIWIAVGALTLLGLVFGAILGYAS) are hydrophobic. The 4Fe-4S domain maps to 32–91 (EDDPVVEKIDAILPQSQCGQCGYPGCRPYAEAVGLQGEKINRCAPGGEAVMLKIAELLNV). 12 residues coordinate [4Fe-4S] cluster: cysteine 49, cysteine 52, cysteine 57, cysteine 74, cysteine 117, cysteine 120, cysteine 123, cysteine 127, cysteine 147, cysteine 150, cysteine 153, and cysteine 157. 4Fe-4S ferredoxin-type domains are found at residues 108 to 137 (MLAVIDENNCIGCTKCIQACPVDAIVGATR) and 138 to 167 (AMHTVMSDLCTGCNLCVDPCPTHCIELRPV).

It belongs to the 4Fe4S bacterial-type ferredoxin family. RnfB subfamily. In terms of assembly, the complex is composed of six subunits: RsxA, RsxB, RsxC, RsxD, RsxE and RsxG. Requires [4Fe-4S] cluster as cofactor.

It localises to the cell inner membrane. Functionally, part of a membrane-bound complex that couples electron transfer with translocation of ions across the membrane. Required to maintain the reduced state of SoxR. The polypeptide is Ion-translocating oxidoreductase complex subunit B (Salmonella dublin (strain CT_02021853)).